Reading from the N-terminus, the 640-residue chain is Threonine--tRNA ligase (640 aa).

Positions 224-525 (DHRKLGKELD…LTEHYAGAFP (302 aa)) are catalytic. The Zn(2+) site is built by Cys-323, His-374, and His-502.

Belongs to the class-II aminoacyl-tRNA synthetase family. Homodimer. It depends on Zn(2+) as a cofactor.

It localises to the cytoplasm. It carries out the reaction tRNA(Thr) + L-threonine + ATP = L-threonyl-tRNA(Thr) + AMP + diphosphate + H(+). Its function is as follows. Catalyzes the attachment of threonine to tRNA(Thr) in a two-step reaction: L-threonine is first activated by ATP to form Thr-AMP and then transferred to the acceptor end of tRNA(Thr). Also edits incorrectly charged L-seryl-tRNA(Thr). In Tropheryma whipplei (strain TW08/27) (Whipple's bacillus), this protein is Threonine--tRNA ligase.